The following is a 128-amino-acid chain: Glycine cleavage system H protein (128 aa).

The Lipoyl-binding domain occupies 25-107 (TFKVGITDHA…YEAGWLFTVR (83 aa)). At lysine 66 the chain carries N6-lipoyllysine.

The protein belongs to the GcvH family. The glycine cleavage system is composed of four proteins: P, T, L and H. (R)-lipoate serves as cofactor.

In terms of biological role, the glycine cleavage system catalyzes the degradation of glycine. The H protein shuttles the methylamine group of glycine from the P protein to the T protein. The protein is Glycine cleavage system H protein of Kocuria rhizophila (strain ATCC 9341 / DSM 348 / NBRC 103217 / DC2201).